The following is a 258-amino-acid chain: SufE-like protein 2, chloroplastic (258 aa).

The interval 1–32 (MNTSSSFKALASPPLISTSRPTTKSFPNPRFT) is disordered. A compositionally biased stretch (polar residues) spans 15–32 (LISTSRPTTKSFPNPRFT). Cysteine 122 (cysteine persulfide intermediate) is an active-site residue.

The protein belongs to the SufE family. As to expression, highly expressed in flowers and pollen, and at low levels in roots, leaves and stems.

Its subcellular location is the plastid. It localises to the chloroplast. The protein operates within cofactor biosynthesis; iron-sulfur cluster biosynthesis. Its function is as follows. Participates in cysteine desulfurization mediated by NFS2. Can activate the cysteine desulfurase activity of NFS2 in vitro. Cysteine desulfurization mobilizes sulfur from L-cysteine to yield L-alanine and supplies the inorganic sulfur for iron-sulfur (Fe-S) cluster formation. In Arabidopsis thaliana (Mouse-ear cress), this protein is SufE-like protein 2, chloroplastic (SUFE2).